Consider the following 150-residue polypeptide: Nucleoside diphosphate kinase (150 aa).

The ATP site is built by Lys-9, Phe-57, Arg-85, Thr-91, Arg-102, and Asn-112. His-115 acts as the Pros-phosphohistidine intermediate in catalysis.

This sequence belongs to the NDK family. Mg(2+) serves as cofactor.

Its subcellular location is the cytoplasm. The catalysed reaction is a 2'-deoxyribonucleoside 5'-diphosphate + ATP = a 2'-deoxyribonucleoside 5'-triphosphate + ADP. It catalyses the reaction a ribonucleoside 5'-diphosphate + ATP = a ribonucleoside 5'-triphosphate + ADP. Major role in the synthesis of nucleoside triphosphates other than ATP. The ATP gamma phosphate is transferred to the NDP beta phosphate via a ping-pong mechanism, using a phosphorylated active-site intermediate. The chain is Nucleoside diphosphate kinase from Methanothermobacter thermautotrophicus (strain ATCC 29096 / DSM 1053 / JCM 10044 / NBRC 100330 / Delta H) (Methanobacterium thermoautotrophicum).